The primary structure comprises 473 residues: Membrane-bound acylglycerophosphatidylinositol O-acyltransferase MBOAT7 (473 aa).

Residues 1 to 5 (MTPEE) lie on the Cytoplasmic side of the membrane. A helical transmembrane segment spans residues 6–22 (WTYLMVLLISIPVGFLF). Residues 23–33 (KKAGPGLKRWG) are Lumenal-facing. The chain crosses the membrane as a helical span at residues 34–57 (AAAVGLGLTLFTCGPHSLHSLITI). Over 58 to 73 (LGTWALIQAQPCSCHA) the chain is Cytoplasmic. Residues 74–93 (LALAWTFSYLLFFRALSLLG) traverse the membrane as a helical segment. At 94–194 (LPTPTPFTNA…VPSLRPLLRR (101 aa)) the chain is on the lumenal side. A helical membrane pass occupies residues 195–212 (AWPAPLFGLLFLLSSHLF). Over 213–231 (PLEAVREDAFYARPLPTRL) the chain is Cytoplasmic. A helical transmembrane segment spans residues 232–261 (FYMIPVFFAFRMRFYVAWIAAECGCIAAGF). The Lumenal segment spans residues 262–426 (GAYPVAAKAR…LSMADTLRYW (165 aa)). A glycan (N-linked (GlcNAc...) asparagine) is linked at Asn-321. Residues 427–447 (ASIYFWVHFLALACLGLGLVL) form a helical membrane-spanning segment. At 448-473 (GGGSPSKRKTPSQATSSQAKEKLREE) the chain is on the cytoplasmic side. The segment at 451–473 (SPSKRKTPSQATSSQAKEKLREE) is disordered.

This sequence belongs to the membrane-bound acyltransferase family. Interacts with SPTSSA; the interaction facilitates MBOAT7 location to mitochondria-associated membranes (MAMs).

It is found in the endoplasmic reticulum membrane. It catalyses the reaction a 1-acyl-sn-glycero-3-phospho-(1D-myo-inositol) + an acyl-CoA = a 1,2-diacyl-sn-glycero-3-phospho-(1D-myo-inositol) + CoA. It carries out the reaction 1-octadecanoyl-sn-glycero-3-phospho-(1D-myo-inositol) + (5Z,8Z,11Z,14Z)-eicosatetraenoyl-CoA = 1-octadecanoyl-2-(5Z,8Z,11Z,14Z-eicosatetraenoyl)-sn-glycero-3-phospho-(1D-myo-inositol) + CoA. The enzyme catalyses a 1-acyl-sn-glycero-3-phospho-(1D-myo-inositol) + (5Z,8Z,11Z,14Z)-eicosatetraenoyl-CoA = a 1-acyl-2-(5Z,8Z,11Z,14Z-eicosatetraenoyl)-sn-glycero-3-phospho-(1D-myo-inositol) + CoA. The catalysed reaction is (5Z,8Z,11Z,14Z)-eicosatetraenoyl-CoA + 1-hexadecanoyl-sn-glycero-3-phosphocholine = 1-hexadecanoyl-2-(5Z,8Z,11Z,14Z-eicosatetraenoyl)-sn-glycero-3-phosphocholine + CoA. Its pathway is lipid metabolism; phospholipid metabolism. In terms of biological role, acyltransferase which catalyzes the transfer of an acyl group from an acyl-CoA to a lysophosphatidylinositol (1-acylglycerophosphatidylinositol or LPI) leading to the production of a phosphatidylinositol (1,2-diacyl-sn-glycero-3-phosphoinositol or PI) and participates in the reacylation step of the phospholipid remodeling pathway also known as the Lands cycle. Prefers arachidonoyl-CoA as the acyl donor, thus contributing to the regulation of free levels arachidonic acid in cell. In liver, participates in the regulation of triglyceride metabolism through the phosphatidylinositol acyl-chain remodeling regulation. The protein is Membrane-bound acylglycerophosphatidylinositol O-acyltransferase MBOAT7 of Mus musculus (Mouse).